The chain runs to 246 residues: MSFRGGRGGGGGGGFRGGRGGGGGGGFRGGRGGDRGGGGFRGGRGGGGRGGFGGGGRGGYDQGPPEEVVLVGVFSHKCQDDIVCNNTSGKIPYFNAPIYFENKEQVGKIDEIFGSPGENGFSVTLSQGVKASSFKSGSELYIDPGKLLPVERFLPQVGGGRGRGGRGRGGDRGRGGDRGRGGFGGRGGGGGGFRGGSRGGFGGGDRGGFRGGRGGDFGGRGRGGDFKRSYDGGGYGGNSNKRTKFD.

Disordered stretches follow at residues 1 to 61 (MSFR…GGYD) and 155 to 246 (PQVG…TKFD). RGG-box stretches follow at residues 4-59 (RGGR…GRGG) and 161-223 (RGRG…RGRG). Positions 168–180 (RGGDRGRGGDRGR) are enriched in basic and acidic residues. Residues 181 to 221 (GGFGGRGGGGGGFRGGSRGGFGGGDRGGFRGGRGGDFGGRG) are compositionally biased toward gly residues.

This sequence belongs to the GAR1 family. Component of the small nucleolar ribonucleoprotein particle containing H/ACA-type snoRNAs (H/ACA snoRNPs).

The protein resides in the nucleus. It is found in the nucleolus. Its function is as follows. Required for ribosome biogenesis. Part of a complex which catalyzes pseudouridylation of rRNA. This involves the isomerization of uridine such that the ribose is subsequently attached to C5, instead of the normal N1. Pseudouridine ('psi') residues may serve to stabilize the conformation of rRNAs. The chain is Probable H/ACA ribonucleoprotein complex subunit 1-like protein from Caenorhabditis briggsae.